The following is a 253-amino-acid chain: Probable transcriptional regulatory protein Mlut_12910 (253 aa).

This sequence belongs to the TACO1 family.

Its subcellular location is the cytoplasm. This chain is Probable transcriptional regulatory protein Mlut_12910, found in Micrococcus luteus (strain ATCC 4698 / DSM 20030 / JCM 1464 / CCM 169 / CCUG 5858 / IAM 1056 / NBRC 3333 / NCIMB 9278 / NCTC 2665 / VKM Ac-2230) (Micrococcus lysodeikticus).